The sequence spans 496 residues: Maintenance of mitochondrial morphology protein 1 (496 aa).

At 1-22 (MSSQLNDPTPIPAQSSLSFTQG) the chain is on the lumenal side. The chain crosses the membrane as a helical span at residues 23-43 (FLLGQLSVVLLIAAFIKFFIF). Topologically, residues 44–496 (GEAPPPPSRG…SLPGGGVTTT (453 aa)) are cytoplasmic. Disordered regions lie at residues 50–96 (PSRG…VPSS), 276–331 (PLDT…KSNV), 395–433 (GRTG…SREP), and 449–496 (DLAS…VTTT). The segment covering 54-64 (LSHRSATHRRS) has biased composition (basic residues). Residues 65 to 74 (NSIYSSTQHD) show a composition bias toward polar residues. The segment covering 75–84 (GNTRTLREKP) has biased composition (basic and acidic residues). Residues 85 to 96 (SNSNVLRPVPSS) are compositionally biased toward polar residues. Residues 131-388 (QPESLDWFNV…EPRVQVVGLP (258 aa)) form the SMP-LTD domain. A compositionally biased stretch (pro residues) spans 276–287 (PLDTPSHSPSPP). Polar residues predominate over residues 407 to 418 (TGSNAPRSSTAA). Composition is skewed to basic and acidic residues over residues 424–433 (AHHEDSSREP) and 462–474 (GDLR…REES).

It belongs to the MMM1 family. Homodimer. Component of the ER-mitochondria encounter structure (ERMES) or MDM complex, composed of mmm1, mdm10, mdm12 and mdm34. A mmm1 homodimer associates with one molecule of mdm12 on each side in a pairwise head-to-tail manner, and the SMP-LTD domains of mmm1 and mdm12 generate a continuous hydrophobic tunnel for phospholipid trafficking.

Its subcellular location is the endoplasmic reticulum membrane. In terms of biological role, component of the ERMES/MDM complex, which serves as a molecular tether to connect the endoplasmic reticulum (ER) and mitochondria. Components of this complex are involved in the control of mitochondrial shape and protein biogenesis, and function in nonvesicular lipid trafficking between the ER and mitochondria. The mdm12-mmm1 subcomplex functions in the major beta-barrel assembly pathway that is responsible for biogenesis of all outer membrane beta-barrel proteins, and acts in a late step after the SAM complex. The mdm10-mdm12-mmm1 subcomplex further acts in the TOM40-specific pathway after the action of the mdm12-mmm1 complex. Essential for establishing and maintaining the structure of mitochondria and maintenance of mtDNA nucleoids. This chain is Maintenance of mitochondrial morphology protein 1, found in Neosartorya fischeri (strain ATCC 1020 / DSM 3700 / CBS 544.65 / FGSC A1164 / JCM 1740 / NRRL 181 / WB 181) (Aspergillus fischerianus).